Consider the following 1077-residue polypeptide: Eukaryotic translation initiation factor 2-alpha kinase pek-1 (1077 aa).

The signal sequence occupies residues 1 to 23 (MSVYYIVLAGFLLFMALVPFNAG). The Lumenal portion of the chain corresponds to 24–453 (QQYIDDDIEV…ITLMQTIFSY (430 aa)). The N-linked (GlcNAc...) asparagine glycan is linked to Asn206. A helical transmembrane segment spans residues 454–474 (IFNPTAVVSFLAGLIGVTVAV). Over 475–1077 (VYNKIAKSSP…HEVATHKFLQ (603 aa)) the chain is Cytoplasmic. The region spanning 604–1076 (FEVKKVIGHG…AHEVATHKFL (473 aa)) is the Protein kinase domain. ATP-binding positions include 610–618 (IGHGGFGVV) and Lys633. The segment at 727–834 (MPPVVGNTTD…FVDGSDDVDN (108 aa)) is disordered. Over residues 732-746 (GNTTDAENSWSTSAK) the composition is skewed to polar residues. Residues 766–778 (GSDRTTAELKEES) show a composition bias toward basic and acidic residues. The span at 783 to 796 (ESDEESDTTEDSSS) shows a compositional bias: acidic residues. A compositionally biased stretch (low complexity) spans 797–808 (SDESPSSSSGSS). The active-site Proton acceptor is the Asp933.

Belongs to the protein kinase superfamily. Ser/Thr protein kinase family. GCN2 subfamily. As to quaternary structure, forms dimers with HSPA5/BIP in resting cells. Oligomerizes in ER-stressed cells. In terms of processing, autophosphorylated. Post-translationally, N-glycosylated. Expressed in intestinal cells.

The protein localises to the endoplasmic reticulum membrane. It carries out the reaction L-seryl-[protein] + ATP = O-phospho-L-seryl-[protein] + ADP + H(+). It catalyses the reaction L-threonyl-[protein] + ATP = O-phospho-L-threonyl-[protein] + ADP + H(+). Its activity is regulated as follows. Perturbation in protein folding in the endoplasmic reticulum (ER) promotes reversible dissociation from HSPA5/BIP and oligomerization, resulting in transautophosphorylation and kinase activity induction. Functionally, phosphorylates the alpha subunit of eukaryotic translation-initiation factor 2 (eIF2alpha), leading to its inactivation and thus to a rapid reduction of translational initiation and repression of global protein synthesis. May phosphorylate eIF2alpha during hypoxia. Proposed to have a role in alleviating endoplasmic reticulum stress. This is Eukaryotic translation initiation factor 2-alpha kinase pek-1 (pek-1) from Caenorhabditis elegans.